The chain runs to 64 residues: Large ribosomal subunit protein bL35 (64 aa).

The segment covering 1–10 (MPKMKTNSAA) has biased composition (polar residues). Positions 1-64 (MPKMKTNSAA…SKNMKKLLGR (64 aa)) are disordered.

This sequence belongs to the bacterial ribosomal protein bL35 family.

In Bifidobacterium adolescentis (strain ATCC 15703 / DSM 20083 / NCTC 11814 / E194a), this protein is Large ribosomal subunit protein bL35.